We begin with the raw amino-acid sequence, 98 residues long: Co-chaperonin GroES (98 aa).

The protein belongs to the GroES chaperonin family. Heptamer of 7 subunits arranged in a ring. Interacts with the chaperonin GroEL.

It localises to the cytoplasm. Its function is as follows. Together with the chaperonin GroEL, plays an essential role in assisting protein folding. The GroEL-GroES system forms a nano-cage that allows encapsulation of the non-native substrate proteins and provides a physical environment optimized to promote and accelerate protein folding. GroES binds to the apical surface of the GroEL ring, thereby capping the opening of the GroEL channel. In Bartonella bacilliformis (strain ATCC 35685 / KC583 / Herrer 020/F12,63), this protein is Co-chaperonin GroES.